Reading from the N-terminus, the 265-residue chain is Pro-opiomelanocortin (265 aa).

A signal peptide spans 1–26 (MPRLCSSRSGALLLALLLQASMEVRG). Disulfide bonds link Cys28/Cys50 and Cys34/Cys46. O-linked (GalNAc...) threonine glycosylation occurs at Thr71. Phenylalanine amide is present on Phe87. The interval 89–138 (RRNGSSSSGVGGAAQKREEEVAVGEGPGPRGDDAETGPREDKRSYSMEHF) is disordered. N-linked (GlcNAc...) asparagine glycosylation occurs at Asn91. Positions 106-129 (EEEVAVGEGPGPRGDDAETGPRED) are excised as a propeptide. Residues 118 to 138 (RGDDAETGPREDKRSYSMEHF) show a composition bias toward basic and acidic residues. Position 132 is an N-acetylserine; in Corticotropin (Ser132). Position 144 is a valine amide (Val144). A Phosphoserine modification is found at Ser162. Glu173 carries the post-translational modification Pyrrolidone carboxylic acid (Glu); partial. Position 200 is a sulfotyrosine (Tyr200). Residues 209–240 (EAAEKKDSGPYKMEHFRWGSPPKDKRYGGFMT) form a disordered region. A compositionally biased stretch (basic and acidic residues) spans 210–235 (AAEKKDSGPYKMEHFRWGSPPKDKRY).

It belongs to the POMC family. Post-translationally, specific enzymatic cleavages at paired basic residues yield the different active peptides. In terms of tissue distribution, ACTH and MSH are produced by the pituitary gland.

It is found in the secreted. Its function is as follows. Stimulates the adrenal glands to release cortisol. Functionally, anorexigenic peptide. Increases the pigmentation of skin by increasing melanin production in melanocytes. Endogenous orexigenic opiate. In terms of biological role, endogenous opiate. This is Pro-opiomelanocortin (POMC) from Bos taurus (Bovine).